Consider the following 134-residue polypeptide: Global transcriptional regulator Spx (134 aa).

A disulfide bond links Cys10 and Cys13.

This sequence belongs to the ArsC family. Spx subfamily. In terms of assembly, interacts with the C-terminal domain of the alpha subunit of the RNAP.

Its subcellular location is the cytoplasm. Functionally, global transcriptional regulator that plays a key role in stress response and exerts either positive or negative regulation of genes. Acts by interacting with the C-terminal domain of the alpha subunit of the RNA polymerase (RNAP). This interaction can enhance binding of RNAP to the promoter region of target genes and stimulate their transcription, or block interaction of RNAP with activator. This chain is Global transcriptional regulator Spx, found in Streptococcus pyogenes serotype M1.